Reading from the N-terminus, the 283-residue chain is MFS-type transporter eupM (283 aa).

7 helical membrane-spanning segments follow: residues 68-88 (LVAW…WGAM), 111-131 (IAWI…VAGP), 136-156 (GGFK…YMML), 165-185 (VLLA…TPMI), 196-216 (IGLA…VYPI), 227-247 (FAWT…IPII), and 263-283 (LIDL…ATMI).

The protein belongs to the major facilitator superfamily. Monocarboxylate porter (TC 2.A.1.13) family.

The protein localises to the membrane. Functionally, MFS-type transporter; part of the gene cluster that mediates the biosynthesis of eupenifeldin, a bistropolone meroterpenoid that acts as an antitumor agent. In Phoma sp, this protein is MFS-type transporter eupM.